The chain runs to 326 residues: F-box/LRR-repeat protein 12 (326 aa).

The 47-residue stretch at 1 to 47 folds into the F-box domain; that stretch reads MATLVELPDSVLLEIFSYLPVRDRIRISRVCHRWKRLVDDRWLWRHV. 8 LRR repeats span residues 51-78, 86-111, 113-133, 161-185, 186-211, 212-236, 237-261, and 266-291; these read LYTM…RMGG, APQL…CLHV, DLSM…ELHS, VPAF…VLGG, TYRV…EVLG, CTLS…IRLT, VRGL…CLQG, and PEMP…ELQG.

In terms of assembly, interacts with SKP1 and CUL1.

It functions in the pathway protein modification; protein ubiquitination. Substrate-recognition component of the SCF (SKP1-CUL1-F-box protein)-type E3 ubiquitin ligase complex. Mediates the polyubiquitination and proteasomal degradation of CAMK1 leading to disruption of cyclin D1/CDK4 complex assembly which results in G1 cell cycle arrest in lung epithelia. The chain is F-box/LRR-repeat protein 12 (FBXL12) from Homo sapiens (Human).